Here is a 206-residue protein sequence, read N- to C-terminus: RNA pyrophosphohydrolase (206 aa).

The region spanning 6–150 (GYRPNVGIVI…KRDVYRKVMK (145 aa)) is the Nudix hydrolase domain. The Nudix box signature appears at 38 to 59 (GGINEGENIETAMYRELYEEVG). A compositionally biased stretch (basic and acidic residues) spans 162 to 191 (KPETVEKPRVERTEKRDFQKRDNQKREFRK). The tract at residues 162–206 (KPETVEKPRVERTEKRDFQKRDNQKREFRKSARMWNNSHQKGKAQ) is disordered.

The protein belongs to the Nudix hydrolase family. RppH subfamily. It depends on a divalent metal cation as a cofactor.

Its function is as follows. Accelerates the degradation of transcripts by removing pyrophosphate from the 5'-end of triphosphorylated RNA, leading to a more labile monophosphorylated state that can stimulate subsequent ribonuclease cleavage. This Actinobacillus pleuropneumoniae serotype 5b (strain L20) protein is RNA pyrophosphohydrolase.